Consider the following 1627-residue polypeptide: Pappalysin-1 (1627 aa).

An N-terminal signal peptide occupies residues 1-22; it reads MRLWSWVLHLGLLSAALGCGLA. Positions 23 to 81 are excised as a propeptide; that stretch reads ERPRRARRDPRAGRPPRPAAGPATCATRAARGRRASPPPPPPPGGAWEAVRVPRRRQQR. Residues 23–99 are disordered; it reads ERPRRARRDP…PSPPSRALYF (77 aa). The span at 42 to 51 shows a compositional bias: low complexity; that stretch reads AGPATCATRA. Intrachain disulfides connect cysteine 144-cysteine 235, cysteine 327-cysteine 622, cysteine 332-cysteine 657, cysteine 414-cysteine 428, cysteine 424-cysteine 440, cysteine 457-cysteine 473, cysteine 474-cysteine 485, cysteine 583-cysteine 600, cysteine 587-cysteine 612, cysteine 710-cysteine 878, cysteine 713-cysteine 881, cysteine 753-cysteine 835, cysteine 775-cysteine 781, cysteine 947-cysteine 975, cysteine 960-cysteine 971, cysteine 983-cysteine 990, and cysteine 999-cysteine 1011. Positions 272–583 are metalloprotease; that stretch reads METHGAHTAL…FRGISEIQSC (312 aa). 2 N-linked (GlcNAc...) asparagine glycosylation sites follow: asparagine 390 and asparagine 402. A glycan (N-linked (GlcNAc...) asparagine) is linked at asparagine 429. A glycan (N-linked (GlcNAc...) asparagine) is linked at asparagine 480. Histidine 562 is a binding site for Zn(2+). Glutamate 563 is an active-site residue. 2 residues coordinate Zn(2+): histidine 566 and histidine 572. 3 N-linked (GlcNAc...) asparagine glycosylation sites follow: asparagine 601, asparagine 619, and asparagine 725. Positions 733 to 754 are disordered; the sequence is SPSGHWSPREAEGHPDVEQPCK. Over residues 739-751 the composition is skewed to basic and acidic residues; the sequence is SPREAEGHPDVEQ. Asparagine 825 is a glycosylation site (N-linked (GlcNAc...) asparagine). Residue asparagine 1026 is glycosylated (N-linked (GlcNAc...) asparagine). Disulfide bonds link cysteine 1036-cysteine 1070, cysteine 1051-cysteine 1139, cysteine 1192-cysteine 1205, cysteine 1215-cysteine 1269, cysteine 1227-cysteine 1238, cysteine 1242-cysteine 1280, cysteine 1285-cysteine 1329, cysteine 1300-cysteine 1310, cysteine 1314-cysteine 1342, cysteine 1346-cysteine 1399, cysteine 1362-cysteine 1373, cysteine 1377-cysteine 1410, cysteine 1415-cysteine 1458, cysteine 1428-cysteine 1438, cysteine 1442-cysteine 1471, cysteine 1478-cysteine 1539, cysteine 1492-cysteine 1502, cysteine 1506-cysteine 1554, and cysteine 1558-cysteine 1576. Sushi domains are found at residues 1213-1282, 1283-1344, 1345-1412, 1413-1473, and 1476-1556; these read TDCP…ACEP, VDCS…LCEL, MCLA…ACVP, VTCD…VCQE, and GQCS…HCVK. Residues asparagine 1222 and asparagine 1226 are each glycosylated (N-linked (GlcNAc...) asparagine). Asparagine 1323 is a glycosylation site (N-linked (GlcNAc...) asparagine). Asparagine 1465 carries N-linked (GlcNAc...) asparagine glycosylation. The N-linked (GlcNAc...) asparagine glycan is linked to asparagine 1519.

The protein belongs to the peptidase M43B family. As to quaternary structure, homodimer; disulfide-linked. In pregnancy serum, predominantly found as a disulfide-linked 2:2 heterotetramer with the proform of PRG2. The cofactor is Zn(2+). Post-translationally, there appear to be no free sulfhydryl groups. As to expression, high levels in placenta and pregnancy serum. In placenta, expressed in X cells in septa and anchoring villi, and in syncytiotrophoblasts in the chorionic villi. Lower levels are found in a variety of other tissues including kidney, myometrium, endometrium, ovaries, breast, prostate, bone marrow, colon, fibroblasts and osteoblasts.

The protein resides in the secreted. It carries out the reaction Cleavage of the 135-Met-|-Lys-136 bond in insulin-like growth factor binding protein (IGFBP)-4, and the 143-Ser-|-Lys-144 bond in IGFBP-5.. Its activity is regulated as follows. Inhibited by complexation with the proform of PRG2. In terms of biological role, metalloproteinase which specifically cleaves IGFBP-4 and IGFBP-5, resulting in release of bound IGF. Cleavage of IGFBP-4 is dramatically enhanced by the presence of IGF, whereas cleavage of IGFBP-5 is slightly inhibited by the presence of IGF. This is Pappalysin-1 (PAPPA) from Homo sapiens (Human).